The primary structure comprises 37 residues: Cytochrome b6-f complex subunit 5 (37 aa).

A helical membrane pass occupies residues 5–25 (LLSGIVLGLIPITLLGLFVTA).

The protein belongs to the PetG family. As to quaternary structure, the 4 large subunits of the cytochrome b6-f complex are cytochrome b6, subunit IV (17 kDa polypeptide, PetD), cytochrome f and the Rieske protein, while the 4 small subunits are PetG, PetL, PetM and PetN. The complex functions as a dimer.

It localises to the plastid. The protein resides in the chloroplast thylakoid membrane. In terms of biological role, component of the cytochrome b6-f complex, which mediates electron transfer between photosystem II (PSII) and photosystem I (PSI), cyclic electron flow around PSI, and state transitions. PetG is required for either the stability or assembly of the cytochrome b6-f complex. This Marchantia polymorpha (Common liverwort) protein is Cytochrome b6-f complex subunit 5.